The primary structure comprises 406 residues: MADGYEDLREDELPGPAYEGYESAELACPAERSGHVAVSDGRHMFVWGGYKSNQVRGLYDFYLPREELWIYNMETGRWKKINTEGDVPPSMSGSCAVCVDRVLYLFGGHHSRGNTNKFYMLDSRSTDRVLHWERIDCQGVPPSSKDKLGVWVYKNKLIFFGGYGYLPEDKVLGTFEFDETSFWNSSHPRGWNDHVHILDTETFIWSQPITTGKPPSPRAAHACATVGNKGFVFGGRYRDARMNDLHYLNLDTWEWNELIPQGICPVGRSWHSLTPVSSDHLFLFGGFTTDKQPLSDAWTYCISKNEWIKFNHPHTEKPRLWHTACASDEGEVIVFGGCANNLLVHHRAAHSNEILIFSVQPKSLVRLSLEAVICFKEMLANSWNCLPKHLLHSVNQRFGSNNTSGS.

6 Kelch repeats span residues 31-85 (ERSG…NTEG), 92-136 (SGSC…ERID), 148-207 (LGVW…IWSQ), 221-259 (HACA…NELI), 271-311 (HSLT…IKFN), and 322-359 (HTAC…IFSV).

Component of a CRL2(KLHDC2) E3 ubiquitin-protein ligase complex, also named ECS(KLHDC2) complex, composed of CUL2, Elongin BC (ELOB and ELOC), RBX1 and substrate-specific adapter KLHDC2. May form oligomers as a KLHDC2-ELOB-ELOC complex; this interaction is autoinhibitory for the E3 ligase complex as the substrate-binding site of KLHDC2 is blocked in the oligomer. Interacts with CREB3; interaction is direct and specific as it does not interact with CREB1, ATF4, ATF6, JUN, FOS, CEBPA or herpes simplex virus transactivator VP16. Post-translationally, autoubiquitinated by the CRL2(KLHDC2) E3 ligase complex.

It is found in the nucleus. It functions in the pathway protein modification; protein ubiquitination. In terms of biological role, substrate-recognition component of a Cul2-RING (CRL2) E3 ubiquitin-protein ligase complex of the DesCEND (destruction via C-end degrons) pathway, which recognizes a C-degron located at the extreme C terminus of target proteins, leading to their ubiquitination and degradation. The C-degron recognized by the DesCEND pathway is usually a motif of less than ten residues and can be present in full-length proteins, truncated proteins or proteolytically cleaved forms. The CRL2(KLHDC2) complex specifically recognizes proteins with a diglycine (Gly-Gly) at the C-terminus, leading to their ubiquitination and degradation. The CRL2(KLHDC2) complex mediates ubiquitination and degradation of truncated SELENOK and SELENOS selenoproteins produced by failed UGA/Sec decoding, which end with a diglycine. The CRL2(KLHDC2) complex also recognizes proteolytically cleaved proteins ending with Gly-Gly, such as the N-terminal fragment of USP1, leading to their degradation. May also act as an indirect repressor of CREB3-mediated transcription by interfering with CREB3-DNA-binding. This Bos taurus (Bovine) protein is Kelch domain-containing protein 2.